A 101-amino-acid chain; its full sequence is NAD(P)H-quinone oxidoreductase subunit 4L, chloroplastic (101 aa).

3 consecutive transmembrane segments (helical) span residues 2 to 22, 32 to 52, and 61 to 81; these read MLEH…YGLI, MCLE…SDFF, and IFSI…SAIV.

Belongs to the complex I subunit 4L family. NDH is composed of at least 16 different subunits, 5 of which are encoded in the nucleus.

It localises to the plastid. It is found in the chloroplast thylakoid membrane. The catalysed reaction is a plastoquinone + NADH + (n+1) H(+)(in) = a plastoquinol + NAD(+) + n H(+)(out). It catalyses the reaction a plastoquinone + NADPH + (n+1) H(+)(in) = a plastoquinol + NADP(+) + n H(+)(out). NDH shuttles electrons from NAD(P)H:plastoquinone, via FMN and iron-sulfur (Fe-S) centers, to quinones in the photosynthetic chain and possibly in a chloroplast respiratory chain. The immediate electron acceptor for the enzyme in this species is believed to be plastoquinone. Couples the redox reaction to proton translocation, and thus conserves the redox energy in a proton gradient. In Citrus sinensis (Sweet orange), this protein is NAD(P)H-quinone oxidoreductase subunit 4L, chloroplastic.